The chain runs to 100 residues: NADH-quinone oxidoreductase subunit K (100 aa).

3 helical membrane passes run 1-21 (MIGLNHYLIVSGLLFCIGLAG), 28-48 (ILLLFFSTEIMLNAINIGFVA), and 64-84 (FIISIAASEVAIGLGLVILWF).

It belongs to the complex I subunit 4L family. As to quaternary structure, NDH-1 is composed of 14 different subunits. Subunits NuoA, H, J, K, L, M, N constitute the membrane sector of the complex.

Its subcellular location is the cell inner membrane. The enzyme catalyses a quinone + NADH + 5 H(+)(in) = a quinol + NAD(+) + 4 H(+)(out). Functionally, NDH-1 shuttles electrons from NADH, via FMN and iron-sulfur (Fe-S) centers, to quinones in the respiratory chain. The immediate electron acceptor for the enzyme in this species is believed to be ubiquinone. Couples the redox reaction to proton translocation (for every two electrons transferred, four hydrogen ions are translocated across the cytoplasmic membrane), and thus conserves the redox energy in a proton gradient. This Helicobacter pylori (strain ATCC 700392 / 26695) (Campylobacter pylori) protein is NADH-quinone oxidoreductase subunit K.